The following is a 94-amino-acid chain: Lipolysis-activating peptide 1-beta chain (94 aa).

An N-terminal signal peptide occupies residues 1 to 19; that stretch reads MKILAVVLISVIVLNTANG. The region spanning 20–87 is the LCN-type CS-alpha/beta domain; it reads ENYYPQKYTN…FFNALESQCP (68 aa). Cystine bridges form between Cys-34–Cys-56, Cys-42–Cys-66, and Cys-46–Cys-68.

This sequence belongs to the long (3 C-C) scorpion toxin superfamily. In terms of assembly, homodimer; disulfide-linked or monomer (edited version) or heterodimer of an alpha chain (AC D9U299 or AC D9U2A4) and this beta chain (non-edited version). Expressed by the venom gland.

The protein resides in the secreted. Functionally, the homodimer inhibits HMG-CoA reductase (HMGCR) (32% of inhibition produced by 0.6 uM), a glycoprotein involved in the control of cholesterol biosynthesis. The inhibitory effects of bumarsin are seen at much lower concentrations (0.6 uM) than that for statins such as atorvastatin (5 mM) and simvastatin (10 uM). In addition to inhibition of HMG-CoA reductase, this protein lowers cholesterol levels by inducing steroid hormone synthesis via StAR, and by increasing reverse cholesterol transport mediated by the induction of ABCA1 and APOA1. In terms of biological role, the heterodimer non-edited LVP1 induces lipolysis in rat adipocytes. Induction of lipolysis by LVP1 appears to be mediated through the beta-2 adrenergic receptor pathway (ADRB2). Its function is as follows. The monomer edited version, similar to alpha-toxins, may modulate voltage-gated sodium channels (Nav) and may block voltage-gated potassium channels (Kv). This chain is Lipolysis-activating peptide 1-beta chain, found in Lychas mucronatus (Chinese swimming scorpion).